The sequence spans 199 residues: Chaperone protein TorD (199 aa).

Belongs to the TorD/DmsD family. TorD subfamily.

It localises to the cytoplasm. Involved in the biogenesis of TorA. Acts on TorA before the insertion of the molybdenum cofactor and, as a result, probably favors a conformation of the apoenzyme that is competent for acquiring the cofactor. The polypeptide is Chaperone protein TorD (Escherichia coli O8 (strain IAI1)).